Here is a 150-residue protein sequence, read N- to C-terminus: Urease accessory protein UreE (150 aa).

It belongs to the UreE family.

The protein resides in the cytoplasm. Functionally, involved in urease metallocenter assembly. Binds nickel. Probably functions as a nickel donor during metallocenter assembly. The polypeptide is Urease accessory protein UreE (Staphylococcus epidermidis (strain ATCC 35984 / DSM 28319 / BCRC 17069 / CCUG 31568 / BM 3577 / RP62A)).